The following is a 126-amino-acid chain: Protein ApaG (126 aa).

The ApaG domain maps to 2–126; the sequence is DVSLPCIKIQ…FRLAVPHVLN (125 aa).

This chain is Protein ApaG, found in Vibrio cholerae serotype O1 (strain ATCC 39541 / Classical Ogawa 395 / O395).